We begin with the raw amino-acid sequence, 300 residues long: Recombination-associated protein RdgC (300 aa).

Belongs to the RdgC family.

It localises to the cytoplasm. The protein resides in the nucleoid. In terms of biological role, may be involved in recombination. The polypeptide is Recombination-associated protein RdgC (Herminiimonas arsenicoxydans).